The chain runs to 434 residues: Eukaryotic peptide chain release factor subunit 1-1 (434 aa).

Belongs to the eukaryotic release factor 1 family. As to quaternary structure, heterodimer of two subunits, one of which binds GTP.

It localises to the cytoplasm. Functionally, directs the termination of nascent peptide synthesis (translation) in response to the termination codons UAA, UAG and UGA. Modulates plant growth and development. In Brassica oleracea var. botrytis (Cauliflower), this protein is Eukaryotic peptide chain release factor subunit 1-1.